Reading from the N-terminus, the 793-residue chain is Ent-copalyl diphosphate synthase, chloroplastic (793 aa).

The N-terminal 47 residues, 1–47, are a transit peptide targeting the chloroplast; sequence MPLASNPVAFLPSSTAHGDLPAAAFSRSSAGCLQLCRPLTPTSSLQC. Mg(2+) contacts are provided by aspartate 372 and aspartate 374. The DXDD motif motif lies at 372-375; the sequence is DIDD.

This sequence belongs to the terpene synthase family. The cofactor is Mg(2+).

Its subcellular location is the plastid. It is found in the chloroplast. The enzyme catalyses (2E,6E,10E)-geranylgeranyl diphosphate = ent-copalyl diphosphate. It participates in plant hormone biosynthesis; gibberellin biosynthesis. Catalyzes the conversion of geranylgeranyl diphosphate (GGPP) to the gibberellin precursor ent-copalyl diphosphate (CPP). This is Ent-copalyl diphosphate synthase, chloroplastic from Salvia miltiorrhiza (Chinese sage).